Reading from the N-terminus, the 286-residue chain is Expansin-B4 (286 aa).

Residues 1–24 (MGSLSSLAAAAVFLSLLAVGHCAA) form the signal peptide. 2 N-linked (GlcNAc...) asparagine glycosylation sites follow: N28 and N44. The 107-residue stretch at 75–181 (GGACGFKHTN…TRVPCEFPGL (107 aa)) folds into the Expansin-like EG45 domain. 3 disulfide bridges follow: C78–C106, C109–C176, and C114–C120. Positions 194-281 (VYFAVLVEYE…NWRPNTFYRS (88 aa)) constitute an Expansin-like CBD domain. N257 is a glycosylation site (N-linked (GlcNAc...) asparagine).

The protein belongs to the expansin family. Expansin B subfamily. In terms of tissue distribution, expressed in internodes.

The protein resides in the secreted. The protein localises to the cell wall. Its subcellular location is the membrane. Its function is as follows. May cause loosening and extension of plant cell walls by disrupting non-covalent bonding between cellulose microfibrils and matrix glucans. No enzymatic activity has been found. May be required for rapid internodal elongation in deepwater rice during submergence. The sequence is that of Expansin-B4 (EXPB4) from Oryza sativa subsp. japonica (Rice).